Consider the following 429-residue polypeptide: Guanine nucleotide-binding protein subunit alpha (429 aa).

Residue Gly-2 is the site of N-myristoyl glycine attachment. The S-palmitoyl cysteine moiety is linked to residue Cys-3. The 390-residue stretch at 40–429 folds into the G-alpha domain; sequence KGVKLLLLGA…QQNLKKSGIM (390 aa). The G1 motif stretch occupies residues 43–56; the sequence is KLLLLGAGESGKST. GTP contacts are provided by Glu-51, Ser-52, Gly-53, Lys-54, Ser-55, and Thr-56. Residue Ser-55 coordinates Mg(2+). Residues 125-197 form a not present in other G-proteins region; it reads LKQIDADVAG…KDSEQFTRLS (73 aa). The segment at 249–257 is G2 motif; the sequence is DILKGRIKT. GTP is bound by residues Leu-251, Thr-257, Gly-279, Asn-345, Lys-346, Asp-348, and Ala-401. Mg(2+) is bound at residue Thr-257. The tract at residues 272–281 is G3 motif; it reads FKVLDAGGQR. The interval 341–348 is G4 motif; it reads ILFLNKID. Residues 399–404 form a G5 motif region; it reads TCATDS.

The protein belongs to the G-alpha family. G(q) subfamily. As to quaternary structure, g proteins are composed of 3 units; alpha, beta and gamma. The alpha chain contains the guanine nucleotide binding site. The cofactor is Mg(2+).

Guanine nucleotide-binding proteins (G proteins) are involved as modulators or transducers in various transmembrane signaling systems. Involved in the mating pathway. The sequence is that of Guanine nucleotide-binding protein subunit alpha (CAG1) from Candida albicans (strain WO-1) (Yeast).